Here is a 243-residue protein sequence, read N- to C-terminus: uncharacterized protein (243 aa).

The 239-residue stretch at 2-240 (TKIFAHRGAS…DFPEKASALL (239 aa)) folds into the GP-PDE domain.

This is an uncharacterized protein from Bacillus subtilis (strain 168).